We begin with the raw amino-acid sequence, 200 residues long: MYAYVKGKLTHLYPTHVVVETAGVGYEIQTPNSYRFQKHLDHEVLIHTSLIVREDAQLLYGFSSEEEKDMFLSLIKVTGIGPKSALAILATSTPNEVKRAIENENDTYLTKFPGIGKKTARQIVLDLKGKVKITEEDSDSLLQVDATSTEQDQFVQEAMLALEALGYSKRELAKVEKTLNKNKYDSVDEAVKAGLQLVVS.

A domain I region spans residues 1–63 (MYAYVKGKLT…EDAQLLYGFS (63 aa)). Positions 64–142 (SEEEKDMFLS…ITEEDSDSLL (79 aa)) are domain II. Residues 143–149 (QVDATST) form a flexible linker region. The segment at 150 to 200 (EQDQFVQEAMLALEALGYSKRELAKVEKTLNKNKYDSVDEAVKAGLQLVVS) is domain III.

Belongs to the RuvA family. In terms of assembly, homotetramer. Forms an RuvA(8)-RuvB(12)-Holliday junction (HJ) complex. HJ DNA is sandwiched between 2 RuvA tetramers; dsDNA enters through RuvA and exits via RuvB. An RuvB hexamer assembles on each DNA strand where it exits the tetramer. Each RuvB hexamer is contacted by two RuvA subunits (via domain III) on 2 adjacent RuvB subunits; this complex drives branch migration. In the full resolvosome a probable DNA-RuvA(4)-RuvB(12)-RuvC(2) complex forms which resolves the HJ.

Its subcellular location is the cytoplasm. Its function is as follows. The RuvA-RuvB-RuvC complex processes Holliday junction (HJ) DNA during genetic recombination and DNA repair, while the RuvA-RuvB complex plays an important role in the rescue of blocked DNA replication forks via replication fork reversal (RFR). RuvA specifically binds to HJ cruciform DNA, conferring on it an open structure. The RuvB hexamer acts as an ATP-dependent pump, pulling dsDNA into and through the RuvAB complex. HJ branch migration allows RuvC to scan DNA until it finds its consensus sequence, where it cleaves and resolves the cruciform DNA. The protein is Holliday junction branch migration complex subunit RuvA of Staphylococcus aureus (strain MRSA252).